A 587-amino-acid polypeptide reads, in one-letter code: APOBEC1 complementation factor (587 aa).

3 RRM domains span residues 56 to 134 (CEIF…ASVD), 136 to 218 (CRLF…WAEP), and 231 to 303 (KILY…LAKP). The required for nuclear localization stretch occupies residues 360-409 (HFPATKGHLSNRAIIRAPSVRGAAGVRGLGGRGYLAYTGLGRGYQVKGDK). At Thr491 the chain carries Phosphothreonine.

As to quaternary structure, part of the apolipoprotein B mRNA editing complex with APOBEC1. Interacts with TNPO2; TNPO2 may be responsible for transport of A1CF into the nucleus. Interacts with SYNCRIP. Interacts with CELF2/CUGBP2. Interacts with RBM47.

It is found in the nucleus. The protein localises to the endoplasmic reticulum. It localises to the cytoplasm. In terms of biological role, essential component of the apolipoprotein B mRNA editing enzyme complex which is responsible for the postranscriptional editing of a CAA codon for Gln to a UAA codon for stop in APOB mRNA. Binds to APOB mRNA and is probably responsible for docking the catalytic subunit, APOBEC1, to the mRNA to allow it to deaminate its target cytosine. The complex also seems to protect the edited APOB mRNA from nonsense-mediated decay. The chain is APOBEC1 complementation factor (A1CF) from Pongo abelii (Sumatran orangutan).